The primary structure comprises 204 residues: Holliday junction branch migration complex subunit RuvA (204 aa).

The domain I stretch occupies residues 1–64 (MIGRLRGVVI…EDAQLLYGFN (64 aa)). Residues 65-143 (HKQERALFRE…GWVSHDLFSP (79 aa)) are domain II. Positions 144-155 (AEISLPARESVL) are flexible linker. The segment at 156 to 204 (RAPDSSEEAASALVALGYKPQQASQIVSKIAKEGMSVEDIIRESLRSLV) is domain III.

This sequence belongs to the RuvA family. In terms of assembly, homotetramer. Forms an RuvA(8)-RuvB(12)-Holliday junction (HJ) complex. HJ DNA is sandwiched between 2 RuvA tetramers; dsDNA enters through RuvA and exits via RuvB. An RuvB hexamer assembles on each DNA strand where it exits the tetramer. Each RuvB hexamer is contacted by two RuvA subunits (via domain III) on 2 adjacent RuvB subunits; this complex drives branch migration. In the full resolvosome a probable DNA-RuvA(4)-RuvB(12)-RuvC(2) complex forms which resolves the HJ.

The protein resides in the cytoplasm. The RuvA-RuvB-RuvC complex processes Holliday junction (HJ) DNA during genetic recombination and DNA repair, while the RuvA-RuvB complex plays an important role in the rescue of blocked DNA replication forks via replication fork reversal (RFR). RuvA specifically binds to HJ cruciform DNA, conferring on it an open structure. The RuvB hexamer acts as an ATP-dependent pump, pulling dsDNA into and through the RuvAB complex. HJ branch migration allows RuvC to scan DNA until it finds its consensus sequence, where it cleaves and resolves the cruciform DNA. In Aeromonas salmonicida (strain A449), this protein is Holliday junction branch migration complex subunit RuvA.